We begin with the raw amino-acid sequence, 293 residues long: Phosphatidylserine decarboxylase proenzyme (293 aa).

Residues D88, H144, and S247 each act as charge relay system; for autoendoproteolytic cleavage activity in the active site. The Schiff-base intermediate with substrate; via pyruvic acid; for decarboxylase activity role is filled by S247. At S247 the chain carries Pyruvic acid (Ser); by autocatalysis.

This sequence belongs to the phosphatidylserine decarboxylase family. PSD-B subfamily. Prokaryotic type I sub-subfamily. As to quaternary structure, heterodimer of a large membrane-associated beta subunit and a small pyruvoyl-containing alpha subunit. The cofactor is pyruvate. Is synthesized initially as an inactive proenzyme. Formation of the active enzyme involves a self-maturation process in which the active site pyruvoyl group is generated from an internal serine residue via an autocatalytic post-translational modification. Two non-identical subunits are generated from the proenzyme in this reaction, and the pyruvate is formed at the N-terminus of the alpha chain, which is derived from the carboxyl end of the proenzyme. The autoendoproteolytic cleavage occurs by a canonical serine protease mechanism, in which the side chain hydroxyl group of the serine supplies its oxygen atom to form the C-terminus of the beta chain, while the remainder of the serine residue undergoes an oxidative deamination to produce ammonia and the pyruvoyl prosthetic group on the alpha chain. During this reaction, the Ser that is part of the protease active site of the proenzyme becomes the pyruvoyl prosthetic group, which constitutes an essential element of the active site of the mature decarboxylase.

The protein resides in the cell membrane. It catalyses the reaction a 1,2-diacyl-sn-glycero-3-phospho-L-serine + H(+) = a 1,2-diacyl-sn-glycero-3-phosphoethanolamine + CO2. It participates in phospholipid metabolism; phosphatidylethanolamine biosynthesis; phosphatidylethanolamine from CDP-diacylglycerol: step 2/2. Catalyzes the formation of phosphatidylethanolamine (PtdEtn) from phosphatidylserine (PtdSer). The sequence is that of Phosphatidylserine decarboxylase proenzyme from Xylella fastidiosa (strain M12).